The following is a 169-amino-acid chain: uncharacterized protein (169 aa).

A run of 2 helical transmembrane segments spans residues 62 to 84 (RWGFFAGGLIFLVSSAIMYLLGL) and 94 to 116 (ALMLFVLPTAFLFVSLLLLYWWF).

The protein localises to the cell membrane. This is an uncharacterized protein from Archaeoglobus fulgidus (strain ATCC 49558 / DSM 4304 / JCM 9628 / NBRC 100126 / VC-16).